We begin with the raw amino-acid sequence, 140 residues long: Sex-regulated protein janus-B (140 aa).

R42 contributes to the substrate binding site. Catalysis depends on H69, which acts as the Proton acceptor. 110 to 112 (SRT) lines the substrate pocket.

The protein belongs to the janus family.

Functionally, janA and janB regulate somatic sex differentiation. The chain is Sex-regulated protein janus-B (janB) from Drosophila erecta (Fruit fly).